Reading from the N-terminus, the 366-residue chain is 5-hydroxytryptamine receptor 1F (366 aa).

Topologically, residues 1–24 are extracellular; sequence MDFLNSSDQNLTSEELLNRMPSKI. Asn-5 and Asn-10 each carry an N-linked (GlcNAc...) asparagine glycan. A helical membrane pass occupies residues 25–49; sequence LVSLTLSGLALMTTTINSLVIAAII. The Cytoplasmic portion of the chain corresponds to 50 to 59; it reads VTRKLHHPAN. Residues 60–81 form a helical membrane-spanning segment; that stretch reads YLICSLAVTDFLVAVLVMPFSI. Topologically, residues 82–96 are extracellular; it reads VYIVRESWIMGQVVC. Cys-96 and Cys-172 are disulfide-bonded. The helical transmembrane segment at 97-119 threads the bilayer; it reads DIWLSVDITCCTCSILHLSAIAL. The serotonin site is built by Asp-103 and Cys-107. The DRY motif; important for ligand-induced conformation changes signature appears at 120 to 122; the sequence is DRY. At 120–139 the chain is on the cytoplasmic side; that stretch reads DRYRAITDAVEYARKRTPKH. Residues 140 to 159 traverse the membrane as a helical segment; sequence AGIMITIVWIISVFISMPPL. Residues 160–178 lie on the Extracellular side of the membrane; sequence FWRHQGTSRDDECIIKHDH. Residues 179 to 202 form a helical membrane-spanning segment; that stretch reads IVSTIYSTFGAFYIPLALILILYY. Over 203-291 the chain is Cytoplasmic; sequence KIYRAAKTLY…KISGTRERKA (89 aa). A helical transmembrane segment spans residues 292-315; it reads ATTLGLILGAFVICWLPFFVKELV. The Extracellular portion of the chain corresponds to 316-327; sequence VNVCDKCKISEE. Residues 328–350 form a helical membrane-spanning segment; it reads MSNFLAWLGYLNSLINPLIYTIF. The NPxxY motif; important for ligand-induced conformation changes and signaling signature appears at 343–347; that stretch reads NPLIY. Over 351 to 366 the chain is Cytoplasmic; it reads NEDFKKAFQKLVRCRC.

This sequence belongs to the G-protein coupled receptor 1 family.

The protein localises to the cell membrane. Functionally, G-protein coupled receptor for 5-hydroxytryptamine (serotonin). Also functions as a receptor for various alkaloids and psychoactive substances. Receptor for lasmiditan, a drug for the treatment of acute migraine. Ligand binding causes a conformation change that triggers signaling via guanine nucleotide-binding proteins (G proteins) and modulates the activity of downstream effectors, such as adenylate cyclase. HTR1F is coupled to G(i)/G(o) G alpha proteins and mediates inhibitory neurotransmission by inhibiting adenylate cyclase activity. The protein is 5-hydroxytryptamine receptor 1F of Homo sapiens (Human).